We begin with the raw amino-acid sequence, 307 residues long: MSKHVAVLMGGLSAEREVSLRSGAACAKALEAEGFRVTTLDVDRDIAQKLAALRPDAALNALHGRYGEDGVIQGVLEMLAIPYTHSGVLASALAMQKDRAKDVLRAAGVPVAEGVTIGRFEAAKAHVMTPPYVVKPLGEGSSFGVIIVRADQTHPPQELTRDDWAYGDLVLVERFVAGRELTCAVIGDKAYGVTEIRAADGGWYDYDAKYKAGGSIHILPANLKEFVYQNVQELALVAHRALGCRGVSRTDFRYDDTPQGTGELVVLEVNSQPGMTETSLVPEIAAYAGISFGELVRWMVEDASCDR.

An ATP-grasp domain is found at 101-301 (KDVLRAAGVP…FGELVRWMVE (201 aa)). Residue 128–182 (MTPPYVVKPLGEGSSFGVIIVRADQTHPPQELTRDDWAYGDLVLVERFVAGRELT) coordinates ATP. Mg(2+)-binding residues include Asp251, Glu268, and Asn270.

This sequence belongs to the D-alanine--D-alanine ligase family. Requires Mg(2+) as cofactor. The cofactor is Mn(2+).

Its subcellular location is the cytoplasm. The enzyme catalyses 2 D-alanine + ATP = D-alanyl-D-alanine + ADP + phosphate + H(+). It functions in the pathway cell wall biogenesis; peptidoglycan biosynthesis. Cell wall formation. The polypeptide is D-alanine--D-alanine ligase (Methylocella silvestris (strain DSM 15510 / CIP 108128 / LMG 27833 / NCIMB 13906 / BL2)).